Reading from the N-terminus, the 331-residue chain is MEQVFFDIYQKAKNDEISKEEALFILKAEDKYIPLIVYLTSKLKDEFFDSQKFEFCSIINAKSGACSEDCKFCAQSKFYKTPINIYKLVDKEELVEGAIRGVEFGANRYCMVLSSRAASDEEVEKLCEAVQEIKAQNIPINVCVSAGTIGLESLLKLKEAGVTRINHNLETSENYFPNIVSTHTWKERLETIKNVQKAGLSTCSGVIFGLGETDEDRVDLAFVYKELGVDSIPLNFLMPIPNTPLENNKPLRALDALKIIAMFRFINKSAELRLCGGREQTLGDFHGMAAFMTNALMAGGYLTRAGRDIKKDYKMLEDMNLERLTSEEVCK.

The region spanning 48 to 278 (FDSQKFEFCS…SAELRLCGGR (231 aa)) is the Radical SAM core domain. [4Fe-4S] cluster is bound by residues Cys-66, Cys-70, and Cys-73. [2Fe-2S] cluster is bound by residues Cys-110, Cys-143, Cys-203, and Arg-273.

This sequence belongs to the radical SAM superfamily. Biotin synthase family. As to quaternary structure, homodimer. It depends on [4Fe-4S] cluster as a cofactor. The cofactor is [2Fe-2S] cluster.

It carries out the reaction (4R,5S)-dethiobiotin + (sulfur carrier)-SH + 2 reduced [2Fe-2S]-[ferredoxin] + 2 S-adenosyl-L-methionine = (sulfur carrier)-H + biotin + 2 5'-deoxyadenosine + 2 L-methionine + 2 oxidized [2Fe-2S]-[ferredoxin]. It functions in the pathway cofactor biosynthesis; biotin biosynthesis; biotin from 7,8-diaminononanoate: step 2/2. In terms of biological role, catalyzes the conversion of dethiobiotin (DTB) to biotin by the insertion of a sulfur atom into dethiobiotin via a radical-based mechanism. The protein is Biotin synthase of Hydrogenobaculum sp. (strain Y04AAS1).